A 406-amino-acid polypeptide reads, in one-letter code: MALDGPEQMELEEGKAGSGLRQYYLSKIEELQLIVNDKSQNLRRLQAQRNELNAKVRLLREELQLLQEQGSYVGEVVRAMDKKKVLVKVHPEGKFVVDVDKNIDINDVTPNCRVALRNDSYTLHKILPNKVDPLVSLMMVEKVPDSTYEMIGGLDKQIKEIKEVIELPVKHPELFEALGIAQPKGVLLYGPPGTGKTLLARAVAHHTDCTFIRVSGSELVQKFIGEGARMVRELFVMAREHAPSIIFMDEIDSIGSSRLEGGSGGDSEVQRTMLELLNQLDGFEATKNIKVIMATNRIDILDSALLRPGRIDRKIEFPPPNEEARLDILKIHSRKMNLTRGINLRKIAELMPGASGAEVKGVCTEAGMYALRERRVHVTQEDFEMAVAKVMQKDSEKNMSIKKLWK.

N-acetylalanine is present on Ala2. Ser120 is subject to Phosphoserine. The tract at residues 186–406 (VLLYGPPGTG…KNMSIKKLWK (221 aa)) is may mediate interaction with PRPF9. 190–197 (GPPGTGKT) contacts ATP. Lys222 carries the post-translational modification N6-acetyllysine.

It belongs to the AAA ATPase family. In terms of assembly, component of the 19S proteasome regulatory particle complex. The 26S proteasome consists of a 20S core particle (CP) and two 19S regulatory subunits (RP). The regulatory particle is made of a lid composed of 9 subunits, a base containing 6 ATPases including PSMC5 and few additional components. Component of a complex with USP49 and RUVBL1. Interacts with PRPF19. Interacts with TRIM5. Interacts with NDC80. Interacts with PAAF1. Interacts, in vitro, with the thyroid hormone receptor (in a thyroid hormone T3-dependent manner) and with retinoid X receptor (RXR). Interacts with ERCC6.

Its subcellular location is the cytoplasm. It localises to the nucleus. Functionally, component of the 26S proteasome, a multiprotein complex involved in the ATP-dependent degradation of ubiquitinated proteins. This complex plays a key role in the maintenance of protein homeostasis by removing misfolded or damaged proteins, which could impair cellular functions, and by removing proteins whose functions are no longer required. Therefore, the proteasome participates in numerous cellular processes, including cell cycle progression, apoptosis, or DNA damage repair. PSMC5 belongs to the heterohexameric ring of AAA (ATPases associated with diverse cellular activities) proteins that unfolds ubiquitinated target proteins that are concurrently translocated into a proteolytic chamber and degraded into peptides. The chain is 26S proteasome regulatory subunit 8 (PSMC5) from Bos taurus (Bovine).